The primary structure comprises 142 residues: MRLLGLDIGSKTVGVSVSDELGITAQKLETIKIDETKYNFGMRPLKKLVRQYEVDGFVLGLPKNMDGTSGASVARSKAYGKRLEEKFGLPVHYSDERLTTIESRRVLVEDAGIHDRKKRKQVIDQMAAVLILQNYLDLHRKD.

It belongs to the YqgF nuclease family.

It localises to the cytoplasm. Could be a nuclease involved in processing of the 5'-end of pre-16S rRNA. In Lactobacillus helveticus (strain DPC 4571), this protein is Putative pre-16S rRNA nuclease.